The primary structure comprises 506 residues: Glutamate--tRNA ligase (506 aa).

A 'HIGH' region motif is present at residues 12-22; the sequence is PSPTGDPHVGT. Positions 253–257 match the 'KMSKS' region motif; that stretch reads KLSKR. Lysine 256 lines the ATP pocket.

The protein belongs to the class-I aminoacyl-tRNA synthetase family. Glutamate--tRNA ligase type 1 subfamily. In terms of assembly, monomer.

The protein resides in the cytoplasm. It catalyses the reaction tRNA(Glu) + L-glutamate + ATP = L-glutamyl-tRNA(Glu) + AMP + diphosphate. Its function is as follows. Catalyzes the attachment of glutamate to tRNA(Glu) in a two-step reaction: glutamate is first activated by ATP to form Glu-AMP and then transferred to the acceptor end of tRNA(Glu). The polypeptide is Glutamate--tRNA ligase (Chlamydia trachomatis serovar L2 (strain ATCC VR-902B / DSM 19102 / 434/Bu)).